The sequence spans 246 residues: ATP synthase subunit a (246 aa).

A propeptide spans 1 to 3 (MIY) (removed in mature form). 7 helical membrane passes run 25–45 (VNNYVMYVALVVTLMYSSVFL), 51–71 (LGFNRWGVALLAVYDTILNMV), 79–99 (GGMYFPFMFTLFTFMLVANLV), 112–132 (LVAIVSFSLSLWFGCVLMGLS), 138–158 (FFALFVPGGTPLALVPVLVLI), 178–198 (VLSGHLLMLILGTLMFNLMGS), and 203–223 (FMGGFMPVMGVIAIVVTEFAI).

Belongs to the ATPase A chain family. F-type ATPases have 2 components, CF(1) - the catalytic core - and CF(0) - the membrane proton channel. CF(1) has five subunits: alpha(3), beta(3), gamma(1), delta(1), epsilon(1). CF(0) has three main subunits: a, b and c.

It is found in the mitochondrion inner membrane. Its function is as follows. Mitochondrial membrane ATP synthase (F(1)F(0) ATP synthase or Complex V) produces ATP from ADP in the presence of a proton gradient across the membrane which is generated by electron transport complexes of the respiratory chain. F-type ATPases consist of two structural domains, F(1) - containing the extramembraneous catalytic core and F(0) - containing the membrane proton channel, linked together by a central stalk and a peripheral stalk. During catalysis, ATP synthesis in the catalytic domain of F(1) is coupled via a rotary mechanism of the central stalk subunits to proton translocation. Key component of the proton channel; it may play a direct role in the translocation of protons across the membrane. This is ATP synthase subunit a (ATP6) from Debaryomyces hansenii (strain ATCC 36239 / CBS 767 / BCRC 21394 / JCM 1990 / NBRC 0083 / IGC 2968) (Yeast).